A 177-amino-acid chain; its full sequence is Large ribosomal subunit protein uL6 (177 aa).

The protein belongs to the universal ribosomal protein uL6 family. Part of the 50S ribosomal subunit.

Its function is as follows. This protein binds to the 23S rRNA, and is important in its secondary structure. It is located near the subunit interface in the base of the L7/L12 stalk, and near the tRNA binding site of the peptidyltransferase center. This is Large ribosomal subunit protein uL6 from Bordetella bronchiseptica (strain ATCC BAA-588 / NCTC 13252 / RB50) (Alcaligenes bronchisepticus).